Reading from the N-terminus, the 156-residue chain is Cell division protein SepF (156 aa).

Residues 15-58 form a disordered region; sequence SDVVPEDEDDEVIDEEPESSFDTDRSVTPIPAASTQPSTSQRKS. Residues 18-35 are compositionally biased toward acidic residues; sequence VPEDEDDEVIDEEPESSF. The segment covering 47-57 has biased composition (polar residues); sequence ASTQPSTSQRK.

Belongs to the SepF family. As to quaternary structure, homodimer. Interacts with FtsZ.

The protein resides in the cytoplasm. Its function is as follows. Cell division protein that is part of the divisome complex and is recruited early to the Z-ring. Probably stimulates Z-ring formation, perhaps through the cross-linking of FtsZ protofilaments. Its function overlaps with FtsA. This Bifidobacterium animalis subsp. lactis (strain AD011) protein is Cell division protein SepF.